The chain runs to 442 residues: MDEESELIQPQDQSCWAFLPDLCLCRVFWWLGDRDRSRAALVCRKWNQMMYSAELWRYRTITFSGRPSRVHASEVESAVWYVKKFGRYLEHLEVKFMNPYNAVLTKKFQVTMRGLLSCLSKSNNRLKSLSIQYLELDRLVWRNSIRSSFISSLSFFLKKMGKRLDYLNLKGARLTVEQGCQILDSLSYMRNENVISELNIEDYFSHHLAVYNSPQFKKTMSTFHNLVSLNLNYNCISDELLENLCENASTLRTINIKCHVHDPHGQVIWGMSWAKLARQATNLKVNFFFERIMKYERLARILLQEIPIRSISLRSCYFSDPDCSMRPTLIDLLPTFRHTLQKLTCEFNNNHESLDEELHLLIISCRKLFYFKIWAFLDVSFVERILKSQKERQCALRVFKARIYTNRYETNEEDKTLQEIYRKYRKLIESELSYFVIVYSVM.

Positions 16 to 61 (WAFLPDLCLCRVFWWLGDRDRSRAALVCRKWNQMMYSAELWRYRTI) constitute an F-box domain.

Directly interacts with SKP1 and CUL1.

Functionally, substrate-recognition component of the SCF (SKP1-CUL1-F-box protein)-type E3 ubiquitin ligase complex. The sequence is that of F-box only protein 39 (FBXO39) from Homo sapiens (Human).